The chain runs to 276 residues: NADPH-dependent 7-cyano-7-deazaguanine reductase (276 aa).

83–85 (IES) is a binding site for substrate. 85-86 (SK) is an NADPH binding site. The active-site Thioimide intermediate is the cysteine 184. Residue aspartate 191 is the Proton donor of the active site. 223–224 (HE) lines the substrate pocket. Residue 252–253 (RG) coordinates NADPH.

The protein belongs to the GTP cyclohydrolase I family. QueF type 2 subfamily. In terms of assembly, homodimer.

The protein localises to the cytoplasm. The catalysed reaction is 7-aminomethyl-7-carbaguanine + 2 NADP(+) = 7-cyano-7-deazaguanine + 2 NADPH + 3 H(+). Its pathway is tRNA modification; tRNA-queuosine biosynthesis. Its function is as follows. Catalyzes the NADPH-dependent reduction of 7-cyano-7-deazaguanine (preQ0) to 7-aminomethyl-7-deazaguanine (preQ1). This is NADPH-dependent 7-cyano-7-deazaguanine reductase from Pseudomonas putida (strain W619).